Here is a 353-residue protein sequence, read N- to C-terminus: Photosystem II D2 protein (353 aa).

An N-acetylthreonine modification is found at Thr-2. Thr-2 carries the post-translational modification Phosphothreonine. A helical transmembrane segment spans residues 41–61; the sequence is CAYFALGGWFTGTTFVTSWYT. His-118 is a chlorophyll a binding site. A helical membrane pass occupies residues 125 to 141; sequence GFMLRQFELARSVQLRP. Pheophytin a contacts are provided by Gln-130 and Asn-143. Residues 153–166 form a helical membrane-spanning segment; that stretch reads VFVSVFLIYPLGQS. His-198 lines the chlorophyll a pocket. A helical membrane pass occupies residues 208-228; it reads AALLCAIHGATVENTLFEDGD. Positions 215 and 262 each coordinate a plastoquinone. His-215 contributes to the Fe cation binding site. Residue His-269 coordinates Fe cation. Residues 279–295 traverse the membrane as a helical segment; it reads GLWMSALGVVGLALNLR.

This sequence belongs to the reaction center PufL/M/PsbA/D family. As to quaternary structure, PSII is composed of 1 copy each of membrane proteins PsbA, PsbB, PsbC, PsbD, PsbE, PsbF, PsbH, PsbI, PsbJ, PsbK, PsbL, PsbM, PsbT, PsbX, PsbY, PsbZ, Psb30/Ycf12, at least 3 peripheral proteins of the oxygen-evolving complex and a large number of cofactors. It forms dimeric complexes. The D1/D2 heterodimer binds P680, chlorophylls that are the primary electron donor of PSII, and subsequent electron acceptors. It shares a non-heme iron and each subunit binds pheophytin, quinone, additional chlorophylls, carotenoids and lipids. There is also a Cl(-1) ion associated with D1 and D2, which is required for oxygen evolution. The PSII complex binds additional chlorophylls, carotenoids and specific lipids. serves as cofactor.

The protein resides in the plastid. Its subcellular location is the chloroplast thylakoid membrane. It catalyses the reaction 2 a plastoquinone + 4 hnu + 2 H2O = 2 a plastoquinol + O2. Photosystem II (PSII) is a light-driven water:plastoquinone oxidoreductase that uses light energy to abstract electrons from H(2)O, generating O(2) and a proton gradient subsequently used for ATP formation. It consists of a core antenna complex that captures photons, and an electron transfer chain that converts photonic excitation into a charge separation. The D1/D2 (PsbA/PsbD) reaction center heterodimer binds P680, the primary electron donor of PSII as well as several subsequent electron acceptors. D2 is needed for assembly of a stable PSII complex. This is Photosystem II D2 protein from Olimarabidopsis pumila (Dwarf rocket).